The primary structure comprises 345 residues: tRNA N6-adenosine threonylcarbamoyltransferase (345 aa).

Fe cation contacts are provided by His109 and His113. Substrate-binding positions include 136-140, Asp169, Gly182, Asp186, and Asn284; that span reads TVSGG. Asp312 serves as a coordination point for Fe cation.

Belongs to the KAE1 / TsaD family. Requires Fe(2+) as cofactor.

It is found in the cytoplasm. The enzyme catalyses L-threonylcarbamoyladenylate + adenosine(37) in tRNA = N(6)-L-threonylcarbamoyladenosine(37) in tRNA + AMP + H(+). Its function is as follows. Required for the formation of a threonylcarbamoyl group on adenosine at position 37 (t(6)A37) in tRNAs that read codons beginning with adenine. Is involved in the transfer of the threonylcarbamoyl moiety of threonylcarbamoyl-AMP (TC-AMP) to the N6 group of A37, together with TsaE and TsaB. TsaD likely plays a direct catalytic role in this reaction. In Prosthecochloris aestuarii (strain DSM 271 / SK 413), this protein is tRNA N6-adenosine threonylcarbamoyltransferase.